We begin with the raw amino-acid sequence, 372 residues long: Queuine tRNA-ribosyltransferase (372 aa).

Asp89 functions as the Proton acceptor in the catalytic mechanism. Substrate contacts are provided by residues 89–93 (DSGGF), Asp161, and Gly232. Residues 262–268 (GIGDLPS) form an RNA binding region. The active-site Nucleophile is Asp281. The interval 286-290 (TKAAR) is RNA binding; important for wobble base 34 recognition. Zn(2+) contacts are provided by Cys319, Cys321, Cys324, and His351.

The protein belongs to the queuine tRNA-ribosyltransferase family. In terms of assembly, homodimer. Within each dimer, one monomer is responsible for RNA recognition and catalysis, while the other monomer binds to the replacement base PreQ1. The cofactor is Zn(2+).

It carries out the reaction 7-aminomethyl-7-carbaguanine + guanosine(34) in tRNA = 7-aminomethyl-7-carbaguanosine(34) in tRNA + guanine. It participates in tRNA modification; tRNA-queuosine biosynthesis. Functionally, catalyzes the base-exchange of a guanine (G) residue with the queuine precursor 7-aminomethyl-7-deazaguanine (PreQ1) at position 34 (anticodon wobble position) in tRNAs with GU(N) anticodons (tRNA-Asp, -Asn, -His and -Tyr). Catalysis occurs through a double-displacement mechanism. The nucleophile active site attacks the C1' of nucleotide 34 to detach the guanine base from the RNA, forming a covalent enzyme-RNA intermediate. The proton acceptor active site deprotonates the incoming PreQ1, allowing a nucleophilic attack on the C1' of the ribose to form the product. After dissociation, two additional enzymatic reactions on the tRNA convert PreQ1 to queuine (Q), resulting in the hypermodified nucleoside queuosine (7-(((4,5-cis-dihydroxy-2-cyclopenten-1-yl)amino)methyl)-7-deazaguanosine). The sequence is that of Queuine tRNA-ribosyltransferase from Chlamydia trachomatis serovar A (strain ATCC VR-571B / DSM 19440 / HAR-13).